Reading from the N-terminus, the 317-residue chain is Protein IRX15-LIKE (317 aa).

Residues 27–47 (LWLLAFVSFFTIAFLLTLLYT) traverse the membrane as a helical segment.

In terms of tissue distribution, expressed in roots, rosette leaves, stems and siliques. Expressed in the xylem.

The protein localises to the golgi apparatus membrane. In terms of biological role, required for xylan biosynthesis, but not directly involved in catalyzing the addition of sugars to the growing polymer. This is Protein IRX15-LIKE (IRX15-L) from Arabidopsis thaliana (Mouse-ear cress).